The sequence spans 313 residues: MAPYPYKVQTTVPELQYENFDGAKFGYMFWPVQNGTNEVRGRVLLIHGFGEYTKIQFRLMDHLSLNGYESFTFDQRGAGVTSPGRSKGVTDEYHVFNDLEHFVEKNLSECKAKGIPLFMWGHSMGGGICLNYACQGKHKNEISGYIGSGPLIILHPHTMYNKPTQIIAPLLAKFLPRVRIDTGLDLKGITSDKAYRAFLGSDPMSVPLYGSFRQIHDFMQRGAKLYKNENNYIQKNFAKDKPVIIMHGQDDTINDPKGSEKFIQDCPSADKELKLYPGARHSIFSLETDKVFNTVFNDMKQWLDKHTTTEAKP.

Residues 121 to 125 carry the GXSXG motif; the sequence is GHSMG. Serine 123 (nucleophile) is an active-site residue. Catalysis depends on charge relay system residues aspartate 251 and histidine 281.

It belongs to the AB hydrolase superfamily. Monoacylglycerol lipase family.

Its subcellular location is the lipid droplet. It localises to the cytoplasm. The protein resides in the endoplasmic reticulum. The protein localises to the mitochondrion outer membrane. It carries out the reaction Hydrolyzes glycerol monoesters of long-chain fatty acids.. The catalysed reaction is a fatty acid ethyl ester + H2O = ethanol + a fatty acid + H(+). The enzyme catalyses 1-(9Z-octadecenoyl)-glycerol + H2O = glycerol + (9Z)-octadecenoate + H(+). It catalyses the reaction 2-(9Z-octadecenoyl)-glycerol + H2O = glycerol + (9Z)-octadecenoate + H(+). It carries out the reaction 1-hexadecanoylglycerol + H2O = glycerol + hexadecanoate + H(+). The catalysed reaction is 2-hexadecanoylglycerol + H2O = glycerol + hexadecanoate + H(+). The enzyme catalyses ethyl hexadecanoate + H2O = ethanol + hexadecanoate + H(+). It catalyses the reaction ethyl (9Z)-octadecenoate + H2O = ethanol + (9Z)-octadecenoate + H(+). It carries out the reaction ethyl (9Z)-hexadecenoate + H2O = (9Z)-hexadecenoate + ethanol + H(+). The catalysed reaction is ethyl octadecanoate + H2O = ethanol + octadecanoate + H(+). It functions in the pathway glycerolipid metabolism; triacylglycerol degradation. Converts monoacylglycerides (MAG) to free fatty acids and glycerol. Has a strong preference for monounsaturated monoglycerides. Required for efficient degradation of MAG, short-lived intermediates of glycerolipid metabolism which may also function as lipid signaling molecules. Controls inactivation of the signaling lipid N-palmitoylethanolamine (PEA). Involved in fatty acid ethyl ester (FAEE) catabolism. FAEEs are non-oxidative metabolites of ethanol that are transiently incorporated into lipid droplets (LDs). Their mobilization by LD-resident FAEE hydrolases facilitates a controlled metabolism of these potentially toxic lipid metabolites. The sequence is that of Monoglyceride lipase (YJU3) from Saccharomyces cerevisiae (strain ATCC 204508 / S288c) (Baker's yeast).